A 499-amino-acid chain; its full sequence is Beta-amylase (499 aa).

3 residues coordinate substrate: D55, H95, and D103. The Proton donor role is filled by E188. Substrate is bound by residues K298, H303, and T345. Residue E383 is the Proton acceptor of the active site. Substrate is bound by residues 384 to 385 and R423; that span reads NA.

This sequence belongs to the glycosyl hydrolase 14 family. Homotetramer.

It catalyses the reaction Hydrolysis of (1-&gt;4)-alpha-D-glucosidic linkages in polysaccharides so as to remove successive maltose units from the non-reducing ends of the chains.. This is Beta-amylase (BMY1) from Ipomoea batatas (Sweet potato).